The sequence spans 223 residues: Deoxyribose-phosphate aldolase 1 (223 aa).

The active-site Proton donor/acceptor is aspartate 91. Lysine 154 serves as the catalytic Schiff-base intermediate with acetaldehyde. Lysine 183 serves as the catalytic Proton donor/acceptor.

The protein belongs to the DeoC/FbaB aldolase family. DeoC type 1 subfamily.

It is found in the cytoplasm. The enzyme catalyses 2-deoxy-D-ribose 5-phosphate = D-glyceraldehyde 3-phosphate + acetaldehyde. It functions in the pathway carbohydrate degradation; 2-deoxy-D-ribose 1-phosphate degradation; D-glyceraldehyde 3-phosphate and acetaldehyde from 2-deoxy-alpha-D-ribose 1-phosphate: step 2/2. Catalyzes a reversible aldol reaction between acetaldehyde and D-glyceraldehyde 3-phosphate to generate 2-deoxy-D-ribose 5-phosphate. This chain is Deoxyribose-phosphate aldolase 1, found in Bacillus licheniformis (strain ATCC 14580 / DSM 13 / JCM 2505 / CCUG 7422 / NBRC 12200 / NCIMB 9375 / NCTC 10341 / NRRL NRS-1264 / Gibson 46).